The chain runs to 277 residues: Urease accessory protein UreD (277 aa).

Belongs to the UreD family. UreD, UreF and UreG form a complex that acts as a GTP-hydrolysis-dependent molecular chaperone, activating the urease apoprotein by helping to assemble the nickel containing metallocenter of UreC. The UreE protein probably delivers the nickel.

The protein localises to the cytoplasm. Required for maturation of urease via the functional incorporation of the urease nickel metallocenter. In Pseudomonas putida (strain W619), this protein is Urease accessory protein UreD.